A 594-amino-acid polypeptide reads, in one-letter code: Probable translation initiation factor IF-2 (594 aa).

In terms of domain architecture, tr-type G spans 11-226 (LRTPIVCVMG…LIGLAQRFLE (216 aa)). Residues 20–27 (GHVDHGKT) are G1. GTP is bound at residue 20–27 (GHVDHGKT). A G2 region spans residues 45–49 (AITQH). The tract at residues 81–84 (DTPG) is G3. Residues 81-85 (DTPGH) and 135-138 (NKID) each bind GTP. Residues 135–138 (NKID) are G4. A G5 region spans residues 203–205 (SAR).

This sequence belongs to the TRAFAC class translation factor GTPase superfamily. Classic translation factor GTPase family. IF-2 subfamily.

Functionally, function in general translation initiation by promoting the binding of the formylmethionine-tRNA to ribosomes. Seems to function along with eIF-2. The chain is Probable translation initiation factor IF-2 from Methanocella arvoryzae (strain DSM 22066 / NBRC 105507 / MRE50).